The following is a 305-amino-acid chain: Ribonuclease BN (305 aa).

Zn(2+) is bound by residues histidine 64, histidine 66, aspartate 68, histidine 69, histidine 141, aspartate 212, and histidine 270. Catalysis depends on aspartate 68, which acts as the Proton acceptor.

Belongs to the RNase Z family. RNase BN subfamily. Homodimer. Requires Zn(2+) as cofactor.

Functionally, zinc phosphodiesterase, which has both exoribonuclease and endoribonuclease activities. This chain is Ribonuclease BN, found in Shigella flexneri.